We begin with the raw amino-acid sequence, 598 residues long: Elongation factor 4 (598 aa).

One can recognise a tr-type G domain in the interval 4 to 186 (DHIRNFSIIA…AIVKRVPPPK (183 aa)). GTP-binding positions include 16 to 21 (DHGKST) and 133 to 136 (NKID).

The protein belongs to the TRAFAC class translation factor GTPase superfamily. Classic translation factor GTPase family. LepA subfamily.

It is found in the cell inner membrane. It carries out the reaction GTP + H2O = GDP + phosphate + H(+). Its function is as follows. Required for accurate and efficient protein synthesis under certain stress conditions. May act as a fidelity factor of the translation reaction, by catalyzing a one-codon backward translocation of tRNAs on improperly translocated ribosomes. Back-translocation proceeds from a post-translocation (POST) complex to a pre-translocation (PRE) complex, thus giving elongation factor G a second chance to translocate the tRNAs correctly. Binds to ribosomes in a GTP-dependent manner. The chain is Elongation factor 4 from Magnetococcus marinus (strain ATCC BAA-1437 / JCM 17883 / MC-1).